The sequence spans 331 residues: MAQLFYDSDADLGLLNGKTVAIIGYGSQGHAHALNLKDSGVNVVVGLYEGSRSAEKAKADGLEVLTVAEASAKADWIMVLLPDEFQKDVYEKEIAPHLKSGKVLSFAHGFNIRFELIKPPADVDVVMIAPKGPGHTVRWEYQNGQGVPALFAIEQDASGNARGLTMAYAKGIGGTRAGILETNFKEETETDLFGEQAVLCGGLSELVKAGFETLVEAGYQPELAYFECMHEVKLIVDLMVKGGLTSMRDSISNTAEYGDYVSGPRLITADTKAEMKRVLADIQDGTFARNFVAECDAGKPEMKKIRDRDAQHPIEKVGKGLRSMFSWLKDA.

A KARI N-terminal Rossmann domain is found at 2–182 (AQLFYDSDAD…GGTRAGILET (181 aa)). NADP(+) is bound by residues 25–28 (YGSQ), Ser-51, Ser-53, and 83–86 (DEFQ). His-108 is an active-site residue. Position 134 (Gly-134) interacts with NADP(+). One can recognise a KARI C-terminal knotted domain in the interval 183 to 328 (NFKEETETDL…KGLRSMFSWL (146 aa)). Asp-191, Glu-195, Glu-227, and Glu-231 together coordinate Mg(2+). Ser-252 serves as a coordination point for substrate.

It belongs to the ketol-acid reductoisomerase family. The cofactor is Mg(2+).

The catalysed reaction is (2R)-2,3-dihydroxy-3-methylbutanoate + NADP(+) = (2S)-2-acetolactate + NADPH + H(+). It carries out the reaction (2R,3R)-2,3-dihydroxy-3-methylpentanoate + NADP(+) = (S)-2-ethyl-2-hydroxy-3-oxobutanoate + NADPH + H(+). It functions in the pathway amino-acid biosynthesis; L-isoleucine biosynthesis; L-isoleucine from 2-oxobutanoate: step 2/4. It participates in amino-acid biosynthesis; L-valine biosynthesis; L-valine from pyruvate: step 2/4. Involved in the biosynthesis of branched-chain amino acids (BCAA). Catalyzes an alkyl-migration followed by a ketol-acid reduction of (S)-2-acetolactate (S2AL) to yield (R)-2,3-dihydroxy-isovalerate. In the isomerase reaction, S2AL is rearranged via a Mg-dependent methyl migration to produce 3-hydroxy-3-methyl-2-ketobutyrate (HMKB). In the reductase reaction, this 2-ketoacid undergoes a metal-dependent reduction by NADPH to yield (R)-2,3-dihydroxy-isovalerate. This chain is Ketol-acid reductoisomerase (NADP(+)), found in Synechococcus sp. (strain CC9902).